The following is a 176-amino-acid chain: Small ribosomal subunit protein uS5 (176 aa).

The S5 DRBM domain maps to 15–78 (FEERIVEIRR…SAARRNVFEV (64 aa)).

It belongs to the universal ribosomal protein uS5 family. Part of the 30S ribosomal subunit. Contacts proteins S4 and S8.

With S4 and S12 plays an important role in translational accuracy. In terms of biological role, located at the back of the 30S subunit body where it stabilizes the conformation of the head with respect to the body. In Thermosipho africanus (strain TCF52B), this protein is Small ribosomal subunit protein uS5.